The sequence spans 470 residues: 6-phospho-beta-galactosidase 1 (470 aa).

D-galactose 6-phosphate is bound by residues Q23, H120, N163, E164, and N300. Catalysis depends on E164, which acts as the Proton donor. E378 serves as the catalytic Nucleophile. 4 residues coordinate D-galactose 6-phosphate: S434, W435, K441, and Y443.

It belongs to the glycosyl hydrolase 1 family.

It carries out the reaction a 6-phospho-beta-D-galactoside + H2O = D-galactose 6-phosphate + an alcohol. Its pathway is carbohydrate metabolism; lactose degradation; D-galactose 6-phosphate and beta-D-glucose from lactose 6-phosphate: step 1/1. This chain is 6-phospho-beta-galactosidase 1, found in Streptococcus pneumoniae serotype 4 (strain ATCC BAA-334 / TIGR4).